The sequence spans 393 residues: Chalcone synthase LF2 (393 aa).

C164 is a catalytic residue.

It belongs to the thiolase-like superfamily. Chalcone/stilbene synthases family.

It catalyses the reaction (E)-4-coumaroyl-CoA + 3 malonyl-CoA + 3 H(+) = 2',4,4',6'-tetrahydroxychalcone + 3 CO2 + 4 CoA. The protein operates within secondary metabolite biosynthesis; flavonoid biosynthesis. The primary product of this enzyme is 4,2',4',6'-tetrahydroxychalcone (also termed naringenin-chalcone or chalcone) which can under specific conditions spontaneously isomerize into naringenin. This is Chalcone synthase LF2 (CHS-LF2) from Ipomoea batatas (Sweet potato).